The chain runs to 271 residues: Small ribosomal subunit protein uS2 (271 aa).

Positions 223-271 are disordered; sequence RALAGSEEGEATEEVTPASEAEKQEVLAEAMSEEGDALQESEVVEEEEK. Residues 253-271 show a composition bias toward acidic residues; it reads MSEEGDALQESEVVEEEEK.

Belongs to the universal ribosomal protein uS2 family.

This Wolinella succinogenes (strain ATCC 29543 / DSM 1740 / CCUG 13145 / JCM 31913 / LMG 7466 / NCTC 11488 / FDC 602W) (Vibrio succinogenes) protein is Small ribosomal subunit protein uS2.